The sequence spans 312 residues: Methionyl-tRNA formyltransferase (312 aa).

109–112 (SLLP) is a (6S)-5,6,7,8-tetrahydrofolate binding site.

The protein belongs to the Fmt family.

It catalyses the reaction L-methionyl-tRNA(fMet) + (6R)-10-formyltetrahydrofolate = N-formyl-L-methionyl-tRNA(fMet) + (6S)-5,6,7,8-tetrahydrofolate + H(+). Functionally, attaches a formyl group to the free amino group of methionyl-tRNA(fMet). The formyl group appears to play a dual role in the initiator identity of N-formylmethionyl-tRNA by promoting its recognition by IF2 and preventing the misappropriation of this tRNA by the elongation apparatus. This is Methionyl-tRNA formyltransferase from Listeria welshimeri serovar 6b (strain ATCC 35897 / DSM 20650 / CCUG 15529 / CIP 8149 / NCTC 11857 / SLCC 5334 / V8).